Consider the following 339-residue polypeptide: Glycerol-3-phosphate dehydrogenase [NAD(P)+] (339 aa).

Residues serine 11, tryptophan 12, and lysine 109 each contribute to the NADPH site. Residues lysine 109, glycine 140, and serine 142 each coordinate sn-glycerol 3-phosphate. Alanine 144 lines the NADPH pocket. The sn-glycerol 3-phosphate site is built by lysine 195, aspartate 249, serine 259, arginine 260, and asparagine 261. Lysine 195 acts as the Proton acceptor in catalysis. An NADPH-binding site is contributed by arginine 260. Residues valine 284 and glutamate 286 each contribute to the NADPH site.

The protein belongs to the NAD-dependent glycerol-3-phosphate dehydrogenase family.

It is found in the cytoplasm. It catalyses the reaction sn-glycerol 3-phosphate + NAD(+) = dihydroxyacetone phosphate + NADH + H(+). The enzyme catalyses sn-glycerol 3-phosphate + NADP(+) = dihydroxyacetone phosphate + NADPH + H(+). The protein operates within membrane lipid metabolism; glycerophospholipid metabolism. Catalyzes the reduction of the glycolytic intermediate dihydroxyacetone phosphate (DHAP) to sn-glycerol 3-phosphate (G3P), the key precursor for phospholipid synthesis. In Lactobacillus johnsonii (strain CNCM I-12250 / La1 / NCC 533), this protein is Glycerol-3-phosphate dehydrogenase [NAD(P)+].